The chain runs to 433 residues: Cysteine--tRNA ligase (433 aa).

Position 4 (Cys-4) interacts with Zn(2+). The 'HIGH' region signature appears at 6–16 (PTVYDTAHIGN). Cys-188, His-213, and Glu-217 together coordinate Zn(2+). The short motif at 246–250 (KMSKS) is the 'KMSKS' region element. Lys-249 serves as a coordination point for ATP.

Belongs to the class-I aminoacyl-tRNA synthetase family. As to quaternary structure, monomer. The cofactor is Zn(2+).

It localises to the cytoplasm. The catalysed reaction is tRNA(Cys) + L-cysteine + ATP = L-cysteinyl-tRNA(Cys) + AMP + diphosphate. The chain is Cysteine--tRNA ligase from Wolbachia sp. subsp. Brugia malayi (strain TRS).